The chain runs to 180 residues: Hypoxanthine-guanine phosphoribosyltransferase (180 aa).

2 residues coordinate diphosphate: lysine 43 and glycine 44. Residues glutamate 99 and aspartate 100 each contribute to the Mg(2+) site. The active-site Proton acceptor is aspartate 103. Residues lysine 131, phenylalanine 152–isoleucine 153, and aspartate 159 each bind GMP. Arginine 165 is a binding site for diphosphate.

The protein belongs to the purine/pyrimidine phosphoribosyltransferase family. Requires Mg(2+) as cofactor.

It localises to the cytoplasm. It carries out the reaction IMP + diphosphate = hypoxanthine + 5-phospho-alpha-D-ribose 1-diphosphate. It catalyses the reaction GMP + diphosphate = guanine + 5-phospho-alpha-D-ribose 1-diphosphate. Its pathway is purine metabolism; IMP biosynthesis via salvage pathway; IMP from hypoxanthine: step 1/1. The protein operates within purine metabolism; GMP biosynthesis via salvage pathway; GMP from guanine: step 1/1. Its function is as follows. Purine salvage pathway enzyme that catalyzes the transfer of the ribosyl-5-phosphate group from 5-phospho-alpha-D-ribose 1-diphosphate (PRPP) to the N9 position of the 6-oxopurines hypoxanthine and guanine to form the corresponding ribonucleotides IMP (inosine 5'-monophosphate) and GMP (guanosine 5'-monophosphate), with the release of PPi. This chain is Hypoxanthine-guanine phosphoribosyltransferase (hpt), found in Streptococcus thermophilus (strain CNRZ 1066).